A 601-amino-acid polypeptide reads, in one-letter code: Sulfite reductase [NADPH] flavoprotein alpha-component (601 aa).

Residues 65–203 enclose the Flavodoxin-like domain; the sequence is ITIISASQTG…NYNKWSQDLL (139 aa). FMN is bound by residues 71-76, 118-121, and 154-163; these read SQTGNA, STQG, and LGDTSYNLFC. In terms of domain architecture, FAD-binding FR-type spans 236–450; that stretch reads KNPAEGIILT…IQTNDNFRLP (215 aa). Residues threonine 324, isoleucine 358, 388-391, 406-408, and 421-424 each bind FAD; these read RLYS, TVG, and GGAS. NADP(+)-binding positions include 521 to 522, 527 to 531, and aspartate 563; these read SQ and KIYVQ. Tyrosine 601 is a binding site for FAD.

The protein belongs to the NADPH-dependent sulphite reductase flavoprotein subunit CysJ family. In the N-terminal section; belongs to the flavodoxin family. It in the C-terminal section; belongs to the flavoprotein pyridine nucleotide cytochrome reductase family. In terms of assembly, alpha(8)-beta(8). The alpha component is a flavoprotein, the beta component is a hemoprotein. FAD is required as a cofactor. The cofactor is FMN.

It catalyses the reaction hydrogen sulfide + 3 NADP(+) + 3 H2O = sulfite + 3 NADPH + 4 H(+). Its pathway is sulfur metabolism; hydrogen sulfide biosynthesis; hydrogen sulfide from sulfite (NADPH route): step 1/1. Component of the sulfite reductase complex that catalyzes the 6-electron reduction of sulfite to sulfide. This is one of several activities required for the biosynthesis of L-cysteine from sulfate. The flavoprotein component catalyzes the electron flow from NADPH -&gt; FAD -&gt; FMN to the hemoprotein component. The sequence is that of Sulfite reductase [NADPH] flavoprotein alpha-component from Buchnera aphidicola subsp. Acyrthosiphon pisum (strain APS) (Acyrthosiphon pisum symbiotic bacterium).